A 269-amino-acid chain; its full sequence is Pertussis toxin subunit 1 (269 aa).

The signal sequence occupies residues 1–34 (MRCTRAIRQTARTGWLTWLAILAVTAPVTSPAWA). An NAD(+)-binding site is contributed by W60. Catalysis depends on residues H69 and E163. A disulfide bridge links C75 with C235.

The protein belongs to the bacterial exotoxin subunit A family. Pertussis toxin contains five different chains, S1-S5. They are organized into 2 functional subunits: A, composed of S1 (which is toxic) and B, containing S2, S3, S5, and two copies of S4 (B binds to the membrane receptors). Dimers of S2-S4 and S3-S4 are held together by S5.

It is found in the secreted. In terms of biological role, S1 is an NAD-dependent ADP-ribosyltransferase, which plays a crucial role in the pathogenesis of B.pertussis causing disruption of normal host cellular regulation. It catalyzes the ADP-ribosylation of a cysteine in the alpha subunit of host heterotrimeric G proteins. In the absence of G proteins it also catalyzes the cleavage of NAD(+) into ADP-ribose and nicotinamide. It irreversibly uncouples the G-alpha GTP-binding proteins from their membrane receptors. The sequence is that of Pertussis toxin subunit 1 (ptxA) from Bordetella pertussis (strain Tohama I / ATCC BAA-589 / NCTC 13251).